The following is a 358-amino-acid chain: E3 ubiquitin-protein ligase RNF146 (358 aa).

The RING-type zinc-finger motif lies at 36–74 (CAICLQTCVHPVSLPCKHVFCYLCVKGASWLGKRCALCR). Residues Lys-84 and Lys-94 each participate in a glycyl lysine isopeptide (Lys-Gly) (interchain with G-Cter in ubiquitin) cross-link. Positions 91–167 (EELKAASRGN…EHGRRRKIKR (77 aa)) constitute a WWE domain. Residues Tyr-107, Arg-110, and Trp-114 each coordinate a glycoprotein. A Glycyl lysine isopeptide (Lys-Gly) (interchain with G-Cter in ubiquitin) cross-link involves residue Lys-130. Tyr-144, Gln-153, Arg-163, and Lys-175 together coordinate a glycoprotein. Residue Lys-175 forms a Glycyl lysine isopeptide (Lys-Gly) (interchain with G-Cter in ubiquitin) linkage. Positions 253–358 (GDNTAERSHR…PDGQCTVTEV (106 aa)) are disordered. Residues 283–297 (SIEETESDASSDSED) are compositionally biased toward acidic residues. 2 positions are modified to phosphoserine: Ser-289 and Ser-293. Residues 305–322 (HSLTQQRLLVSNANQTVP) are compositionally biased toward polar residues.

In terms of assembly, can form homooligomers. Interacts with PARsylated AXIN1, AXIN2, BLZF1, CASC3, H1-2, IPO7, LIG3, NCL, PARP1, XRCC1, XRCC5 and XRCC6. Interacts with DDB1, DHX15, IQGAP1, LRPPRC, PARP2, PRKDC, RUVBL2, TNKS1 and TNKS2. Binding often leads to interactor ubiquitination, in the presence of the appropriate E1 and E2 enzymes, and proteasomal degradation. In terms of processing, ubiquitinated; autoubiquitinated. Autoubiquitination is enhanced upon poly(ADP-ribose)-binding.

The protein resides in the cytoplasm. It is found in the cytosol. It localises to the nucleus. The catalysed reaction is S-ubiquitinyl-[E2 ubiquitin-conjugating enzyme]-L-cysteine + [acceptor protein]-L-lysine = [E2 ubiquitin-conjugating enzyme]-L-cysteine + N(6)-ubiquitinyl-[acceptor protein]-L-lysine.. It participates in protein modification; protein ubiquitination. E3 ubiquitin-protein ligase that specifically binds poly-ADP-ribosylated (PARsylated) proteins and mediates their ubiquitination and subsequent degradation. May regulate many important biological processes, such as cell survival and DNA damage response. Acts as an activator of the Wnt signaling pathway by mediating the ubiquitination of PARsylated AXIN1 and AXIN2, 2 key components of the beta-catenin destruction complex. Acts in cooperation with tankyrase proteins (TNKS and TNKS2), which mediate PARsylation of target proteins AXIN1, AXIN2, BLZF1, CASC3, TNKS and TNKS2. Recognizes and binds tankyrase-dependent PARsylated proteins via its WWE domain and mediates their ubiquitination, leading to their degradation. Different ubiquitin linkage types have been observed: TNKS2 undergoes ubiquitination at 'Lys-48' and 'Lys-63', while AXIN1 is only ubiquitinated at 'Lys-48'. May regulate TNKS and TNKS2 subcellular location, preventing aggregation at a centrosomal location. Neuroprotective protein. Protects the brain against N-methyl-D-aspartate (NMDA) receptor-mediated glutamate excitotoxicity and ischemia, by interfering with PAR-induced cell death, called parthanatos. Prevents nuclear translocation of AIFM1 in a PAR-binding dependent manner. Does not affect PARP1 activation. Protects against cell death induced by DNA damaging agents, such as N-methyl-N-nitro-N-nitrosoguanidine (MNNG) and rescues cells from G1 arrest. Promotes cell survival after gamma-irradiation. Facilitates DNA repair. The chain is E3 ubiquitin-protein ligase RNF146 (RNF146) from Pongo abelii (Sumatran orangutan).